The primary structure comprises 201 residues: uncharacterized protein (201 aa).

This is an uncharacterized protein from Saccharomyces cerevisiae (strain ATCC 204508 / S288c) (Baker's yeast).